Reading from the N-terminus, the 406-residue chain is DAZ-associated protein 1 (406 aa).

An N-acetylmethionine modification is found at Met1. RRM domains follow at residues 10 to 97 (GKLF…RTRP) and 113 to 190 (NKIF…RAEP). The tract at residues 74–117 (TLDGRNIDPKPCTPRGMQPERTRPKEGWQKGPRSDSSKSNKIFV) is disordered. The span at 91–111 (QPERTRPKEGWQKGPRSDSSK) shows a compositional bias: basic and acidic residues. Lys150 is subject to N6-acetyllysine. Residues 186 to 406 (KRAEPRDSKN…NVQGFHPYRR (221 aa)) form a disordered region. Residues 195–207 (NQAPGQPGASQWG) show a composition bias toward polar residues. The segment covering 247-262 (GPPPAGRGAPPPPPPF) has biased composition (pro residues). An Omega-N-methylarginine modification is found at Arg253. Low complexity predominate over residues 280–294 (FPQGYGAPPQFSFGY). Residues 295–315 (GPPPPPPDQFAPPGVPPPPAT) show a composition bias toward pro residues. Residues 363-378 (SDPSQQPPSYGGPSVP) are compositionally biased toward low complexity. The span at 379-392 (GSGGPPAGGSGFGR) shows a compositional bias: gly residues.

As to quaternary structure, interacts with DAZ and DAZL. Acetylation at Lys-150 is predominantly observed in the nuclear fraction, and may regulate nucleocytoplasmic transport. As to expression, mainly expressed in testis. Expressed at much lower level in liver, heart and brain. Also expressed in ovary. Expressed throughout testes development, in both the prenatal and postnatal periods.

It localises to the cytoplasm. It is found in the nucleus. Functionally, RNA-binding protein, which may be required during spermatogenesis. The sequence is that of DAZ-associated protein 1 (Dazap1) from Mus musculus (Mouse).